The primary structure comprises 176 residues: MKLIVGLGNPGQNYQFTLHNIGFMMIDYLLNTIITDKKIVKKHNSYIYKANVGSNLVLFVKPQTYMNSSGHAVKKILNEYKIILNDLLVLSDDIYLPEGNYKLKLKGGHGGHNGLRNIIDCLQTKKFKRLKIGVSQDHNISLEDYLLTPIDDKKKLMVQKSFPIISNIIKNFIQDC.

TRNA is bound at residue Tyr-14. His-19 functions as the Proton acceptor in the catalytic mechanism. 3 residues coordinate tRNA: Tyr-65, Asn-67, and Asn-113.

This sequence belongs to the PTH family. In terms of assembly, monomer.

Its subcellular location is the cytoplasm. The catalysed reaction is an N-acyl-L-alpha-aminoacyl-tRNA + H2O = an N-acyl-L-amino acid + a tRNA + H(+). In terms of biological role, hydrolyzes ribosome-free peptidyl-tRNAs (with 1 or more amino acids incorporated), which drop off the ribosome during protein synthesis, or as a result of ribosome stalling. Functionally, catalyzes the release of premature peptidyl moieties from peptidyl-tRNA molecules trapped in stalled 50S ribosomal subunits, and thus maintains levels of free tRNAs and 50S ribosomes. This Phytoplasma mali (strain AT) protein is Peptidyl-tRNA hydrolase.